The chain runs to 408 residues: Mitochondrial outer membrane protein SLC25A46 (408 aa).

2 disordered regions span residues 1–23 (MHPRRPEGFDGLGYRGGGREEPC) and 52–80 (HWGEKTPPYGAGTPLGAAGLNEEPGLGAG). Residues 66 to 76 (LGAAGLNEEPG) are compositionally biased toward low complexity. One copy of the Solcar 1 repeat lies at 86–177 (QLNRFAGFGI…GIISEFTPLP (92 aa)). 6 consecutive transmembrane segments (helical) span residues 93–113 (FGIGLASLFTENVLAHPCIVL), 157–177 (FIVQGITLGTEGIISEFTPLP), 189–209 (IGGHLLLKGLTHVIAMPFYSA), 248–268 (LLPLMVLIFPTALHGVLHYVI), 304–324 (FPELIASFAASLCADVMLYPL), and 373–393 (LGFYKGFGAVVVQYTLHVAVL). Residues 301–403 (DAYFPELIAS…QLTKIIYSTL (103 aa)) form a Solcar 2 repeat.

It belongs to the mitochondrial carrier (TC 2.A.29) family.

The protein resides in the mitochondrion outer membrane. Functionally, transmembrane protein of the mitochondrial outer membrane that controls mitochondrial organization. May regulate the assembly of the MICOS (mitochondrial contact site and cristae organizing system) complex which is essential to the biogenesis and dynamics of mitochondrial cristae, the inwards folds of the inner mitochondrial membrane. Through its interaction with the EMC (endoplasmic reticulum membrane protein complex), could regulate mitochondrial lipid homeostasis and thereby mitochondrial fission. The polypeptide is Mitochondrial outer membrane protein SLC25A46 (Gallus gallus (Chicken)).